We begin with the raw amino-acid sequence, 387 residues long: 3-ketoacyl-CoA thiolase (387 aa).

Residue Cys91 is the Acyl-thioester intermediate of the active site. Catalysis depends on proton acceptor residues His343 and Cys373.

It belongs to the thiolase-like superfamily. Thiolase family. Heterotetramer of two alpha chains (FadB) and two beta chains (FadA).

Its subcellular location is the cytoplasm. It catalyses the reaction an acyl-CoA + acetyl-CoA = a 3-oxoacyl-CoA + CoA. It functions in the pathway lipid metabolism; fatty acid beta-oxidation. Its function is as follows. Catalyzes the final step of fatty acid oxidation in which acetyl-CoA is released and the CoA ester of a fatty acid two carbons shorter is formed. This is 3-ketoacyl-CoA thiolase from Erwinia tasmaniensis (strain DSM 17950 / CFBP 7177 / CIP 109463 / NCPPB 4357 / Et1/99).